A 599-amino-acid chain; its full sequence is Probable acetolactate synthase large subunit (599 aa).

Glutamate 47 is a thiamine diphosphate binding site. Residues arginine 149, 258–279 (HGTKPANYCLSESDVLISIGCR), and 301–320 (DIDPAEIGKNVNVDVPIVGD) contribute to the FAD site. Residues 404–484 (QNQMWMAHYF…VVICIFDNRT (81 aa)) form a thiamine pyrophosphate binding region. Positions 455 and 482 each coordinate Mg(2+).

This sequence belongs to the TPP enzyme family. As to quaternary structure, dimer of large and small chains. Mg(2+) serves as cofactor. Thiamine diphosphate is required as a cofactor.

It catalyses the reaction 2 pyruvate + H(+) = (2S)-2-acetolactate + CO2. Its pathway is amino-acid biosynthesis; L-isoleucine biosynthesis; L-isoleucine from 2-oxobutanoate: step 1/4. It functions in the pathway amino-acid biosynthesis; L-valine biosynthesis; L-valine from pyruvate: step 1/4. This Methanococcus aeolicus protein is Probable acetolactate synthase large subunit (ilvB).